The sequence spans 164 residues: Pathogenesis-related protein PRB1-2 (164 aa).

An N-terminal signal peptide occupies residues 1–24 (MQTPKLAILLALAMAAAMVNLSQA). Pyrrolidone carboxylic acid is present on glutamine 25. The 119-residue stretch at 34 to 152 (PHNAARSAVG…NRGVFITCNY (119 aa)) folds into the SCP domain. Cystine bridges form between cysteine 68–cysteine 140, cysteine 113–cysteine 119, and cysteine 135–cysteine 150.

It belongs to the CRISP family.

Functionally, probably involved in the defense reaction of plants against pathogens. The chain is Pathogenesis-related protein PRB1-2 from Hordeum vulgare (Barley).